Consider the following 132-residue polypeptide: Translation initiation factor 5A (132 aa).

K36 is subject to Hypusine.

This sequence belongs to the eIF-5A family.

It is found in the cytoplasm. In terms of biological role, functions by promoting the formation of the first peptide bond. In Caldivirga maquilingensis (strain ATCC 700844 / DSM 13496 / JCM 10307 / IC-167), this protein is Translation initiation factor 5A (eIF5A).